A 243-amino-acid polypeptide reads, in one-letter code: 1-(5-phosphoribosyl)-5-[(5-phosphoribosylamino)methylideneamino] imidazole-4-carboxamide isomerase (243 aa).

Aspartate 10 (proton acceptor) is an active-site residue. Catalysis depends on aspartate 129, which acts as the Proton donor.

The protein belongs to the HisA/HisF family.

The protein resides in the cytoplasm. The enzyme catalyses 1-(5-phospho-beta-D-ribosyl)-5-[(5-phospho-beta-D-ribosylamino)methylideneamino]imidazole-4-carboxamide = 5-[(5-phospho-1-deoxy-D-ribulos-1-ylimino)methylamino]-1-(5-phospho-beta-D-ribosyl)imidazole-4-carboxamide. Its pathway is amino-acid biosynthesis; L-histidine biosynthesis; L-histidine from 5-phospho-alpha-D-ribose 1-diphosphate: step 4/9. The sequence is that of 1-(5-phosphoribosyl)-5-[(5-phosphoribosylamino)methylideneamino] imidazole-4-carboxamide isomerase from Nocardia farcinica (strain IFM 10152).